A 142-amino-acid chain; its full sequence is MNCSESQRLRTLLSRLLLELHHRGNASGLGAGPRPSMGMGVVPDPFVGREVTSAKGDDAYLYILLIMIFYACLAGGLILAYTRSRKLVEAKDEPSQACAEHEWAPGGALTADAEAAAGSQAEGRRQLASEGLPALAQGAERV.

N-linked (GlcNAc...) asparagine glycosylation is found at N2 and N25. A helical membrane pass occupies residues 61 to 81; the sequence is LYILLIMIFYACLAGGLILAY. The Cytoplasmic segment spans residues 82-142; that stretch reads TRSRKLVEAK…PALAQGAERV (61 aa). Positions 119 to 142 are disordered; that stretch reads SQAEGRRQLASEGLPALAQGAERV.

The protein belongs to the potassium channel KCNE family. Interacts with KCNQ1; impairs KCNQ1 localization in lipid rafts and only conducts current upon strong and continued depolarization. As to expression, highly expressed in heart, skeletal muscle, brain, spinal cord and placenta.

The protein localises to the membrane. Its function is as follows. Potassium channel ancillary subunit that is essential for generation of some native K(+) currents by virtue of formation of heteromeric ion channel complex with voltage-gated potassium (Kv) channel pore-forming alpha subunits. Functions as an inhibitory beta-subunit of the repolarizing cardiac potassium ion channel KCNQ1. The protein is Potassium voltage-gated channel subfamily E regulatory beta subunit 5 (KCNE5) of Homo sapiens (Human).